A 147-amino-acid polypeptide reads, in one-letter code: Large ribosomal subunit protein uL15 (147 aa).

The disordered stretch occupies residues 1 to 55 (MKLDNLAPQPGAKKRKRRVGRGIAAGQGASCGFGMRGQKSRSGRPTRPGFEGGQM). Over residues 23–35 (IAAGQGASCGFGM) the composition is skewed to gly residues.

This sequence belongs to the universal ribosomal protein uL15 family. Part of the 50S ribosomal subunit.

Binds to the 23S rRNA. In Synechococcus elongatus (strain ATCC 33912 / PCC 7942 / FACHB-805) (Anacystis nidulans R2), this protein is Large ribosomal subunit protein uL15.